A 1058-amino-acid polypeptide reads, in one-letter code: Ubiquitin-like modifier-activating enzyme 1 (1058 aa).

The disordered stretch occupies residues 1–47; it reads MSSSPLSKKRRVSGPDPKPGSNCSPAQSVLPQVPSAPTNGMAKNGSE. Position 2 is an N-acetylserine (serine 2). Phosphoserine occurs at positions 4, 13, 21, 24, and 46. Polar residues predominate over residues 21-38; it reads SNCSPAQSVLPQVPSAPT. A Phosphotyrosine modification is found at tyrosine 55. 2 tandem repeats follow at residues 63-199 and 459-611. Residues 63-611 form a 2 approximate repeats region; it reads GHEAMKRLQT…GTKGNVQVVI (549 aa). Residues alanine 478, aspartate 504, arginine 515, lysine 528, and 576–577 each bind ATP; that span reads DN. The residue at position 528 (lysine 528) is an N6-succinyllysine. Cysteine 632 acts as the Glycyl thioester intermediate in catalysis. Lysine 671 carries the N6-acetyllysine modification. Position 800 is a phosphothreonine (threonine 800). 4 positions are modified to phosphoserine: serine 810, serine 816, serine 820, and serine 835. Lysine 980 bears the N6-acetyllysine mark.

It belongs to the ubiquitin-activating E1 family. As to quaternary structure, monomer. In terms of tissue distribution, ubiquitous.

Its subcellular location is the cytoplasm. The protein resides in the mitochondrion. It localises to the nucleus. It catalyses the reaction ATP + ubiquitin + [E1 ubiquitin-activating enzyme]-L-cysteine = AMP + diphosphate + S-ubiquitinyl-[E1 ubiquitin-activating enzyme]-L-cysteine.. It participates in protein modification; protein ubiquitination. In terms of biological role, catalyzes the first step in ubiquitin conjugation to mark cellular proteins for degradation through the ubiquitin-proteasome system. Activates ubiquitin by first adenylating its C-terminal glycine residue with ATP, and thereafter linking this residue to the side chain of a cysteine residue in E1, yielding a ubiquitin-E1 thioester and free AMP. Essential for the formation of radiation-induced foci, timely DNA repair and for response to replication stress. Promotes the recruitment of TP53BP1 and BRCA1 at DNA damage sites. This chain is Ubiquitin-like modifier-activating enzyme 1 (UBA1), found in Oryctolagus cuniculus (Rabbit).